We begin with the raw amino-acid sequence, 167 residues long: Putative 4-hydroxy-4-methyl-2-oxoglutarate aldolase (167 aa).

Residues 81 to 84 (GDII) and Arg103 each bind substrate. Asp104 lines the a divalent metal cation pocket.

It belongs to the class II aldolase/RraA-like family. In terms of assembly, homotrimer. A divalent metal cation is required as a cofactor.

The catalysed reaction is 4-hydroxy-4-methyl-2-oxoglutarate = 2 pyruvate. It catalyses the reaction oxaloacetate + H(+) = pyruvate + CO2. In terms of biological role, catalyzes the aldol cleavage of 4-hydroxy-4-methyl-2-oxoglutarate (HMG) into 2 molecules of pyruvate. Also contains a secondary oxaloacetate (OAA) decarboxylase activity due to the common pyruvate enolate transition state formed following C-C bond cleavage in the retro-aldol and decarboxylation reactions. The sequence is that of Putative 4-hydroxy-4-methyl-2-oxoglutarate aldolase from Corynebacterium jeikeium (strain K411).